The sequence spans 263 residues: Acyl-[acyl-carrier-protein]--UDP-N-acetylglucosamine O-acyltransferase (263 aa).

It belongs to the transferase hexapeptide repeat family. LpxA subfamily. As to quaternary structure, homotrimer.

It is found in the cytoplasm. It catalyses the reaction a (3R)-hydroxyacyl-[ACP] + UDP-N-acetyl-alpha-D-glucosamine = a UDP-3-O-[(3R)-3-hydroxyacyl]-N-acetyl-alpha-D-glucosamine + holo-[ACP]. Its pathway is glycolipid biosynthesis; lipid IV(A) biosynthesis; lipid IV(A) from (3R)-3-hydroxytetradecanoyl-[acyl-carrier-protein] and UDP-N-acetyl-alpha-D-glucosamine: step 1/6. Its function is as follows. Involved in the biosynthesis of lipid A, a phosphorylated glycolipid that anchors the lipopolysaccharide to the outer membrane of the cell. The protein is Acyl-[acyl-carrier-protein]--UDP-N-acetylglucosamine O-acyltransferase of Stenotrophomonas maltophilia (strain K279a).